Here is a 336-residue protein sequence, read N- to C-terminus: Malate dehydrogenase, cytoplasmic (336 aa).

Residues 11–17 and D42 contribute to the NAD(+) site; that span reads GAAGQIG. Residues R92 and R98 each coordinate substrate. NAD(+) is bound by residues N105, Q112, and 129 to 131; that span reads VGN. Substrate contacts are provided by N131 and R163. H188 functions as the Proton acceptor in the catalytic mechanism.

Belongs to the LDH/MDH superfamily. MDH type 2 family. In terms of assembly, homodimer.

The protein localises to the cytoplasm. The enzyme catalyses (S)-malate + NAD(+) = oxaloacetate + NADH + H(+). Its function is as follows. Catalyzes the reversible conversion of (S)-malate to oxaloacetate in the cytoplasm where oxaloacetate is used for gluconeogenesis. The chain is Malate dehydrogenase, cytoplasmic from Caenorhabditis elegans.